A 162-amino-acid chain; its full sequence is NADH-quinone oxidoreductase subunit I (162 aa).

4Fe-4S ferredoxin-type domains follow at residues 53 to 83 and 93 to 122; these read LRRY…IDSA and TRYD…ETHI. Positions 63, 66, 69, 73, 102, 105, 108, and 112 each coordinate [4Fe-4S] cluster.

This sequence belongs to the complex I 23 kDa subunit family. NDH-1 is composed of 14 different subunits. Subunits NuoA, H, J, K, L, M, N constitute the membrane sector of the complex. The cofactor is [4Fe-4S] cluster.

It localises to the cell inner membrane. It catalyses the reaction a quinone + NADH + 5 H(+)(in) = a quinol + NAD(+) + 4 H(+)(out). Functionally, NDH-1 shuttles electrons from NADH, via FMN and iron-sulfur (Fe-S) centers, to quinones in the respiratory chain. The immediate electron acceptor for the enzyme in this species is believed to be ubiquinone. Couples the redox reaction to proton translocation (for every two electrons transferred, four hydrogen ions are translocated across the cytoplasmic membrane), and thus conserves the redox energy in a proton gradient. The sequence is that of NADH-quinone oxidoreductase subunit I from Xanthomonas oryzae pv. oryzae (strain MAFF 311018).